The following is a 122-amino-acid chain: Large ribosomal subunit protein uL14 (122 aa).

The protein belongs to the universal ribosomal protein uL14 family. As to quaternary structure, part of the 50S ribosomal subunit. Forms a cluster with proteins L3 and L19. In the 70S ribosome, L14 and L19 interact and together make contacts with the 16S rRNA in bridges B5 and B8.

Functionally, binds to 23S rRNA. Forms part of two intersubunit bridges in the 70S ribosome. The protein is Large ribosomal subunit protein uL14 of Roseiflexus castenholzii (strain DSM 13941 / HLO8).